Consider the following 433-residue polypeptide: Tubulin epsilon and delta complex protein 2 (433 aa).

3 disordered regions span residues 45–69 (TGTR…ACTP), 95–169 (TKAG…VGMG), and 326–345 (QPPR…SCGG). The span at 107–120 (KSRSIVTSSGTTAS) shows a compositional bias: polar residues. At S159 the chain carries Phosphoserine. A compositionally biased stretch (pro residues) spans 327–339 (PPRPCPVGRPPGA).

As to quaternary structure, interacts with TEDC1. Found in a complex with TEDC1, TEDC2, TUBE1 and TUBD1.

Its subcellular location is the cell projection. The protein localises to the cilium. It localises to the cytoplasm. The protein resides in the cytoskeleton. It is found in the microtubule organizing center. Its subcellular location is the centrosome. The protein localises to the centriole. In terms of biological role, acts as a positive regulator of ciliary hedgehog signaling. Required for centriole stability. The protein is Tubulin epsilon and delta complex protein 2 of Homo sapiens (Human).